A 412-amino-acid chain; its full sequence is NFATC2-interacting protein (412 aa).

The tract at residues 1–38 is disordered; the sequence is MAEPLRGRGPRSRGGRGARRARGARGRCPRARQSPARL. The segment covering 8-30 has biased composition (basic residues); it reads RGPRSRGGRGARRARGARGRCPR. A phosphoserine mark is found at S49, S51, S79, S81, and S83. The tract at residues 58–115 is disordered; it reads VADPVEVPVARLPAPAKPEQDSDSDSEGAAEGPAGAPRTLVRRRRRRLLDPGEAPVVP. A compositionally biased stretch (low complexity) spans 86–96; it reads AAEGPAGAPRT. S118 is subject to Phosphoserine. A Glycyl lysine isopeptide (Lys-Gly) (interchain with G-Cter in SUMO2) cross-link involves residue K120. The interval 136 to 206 is disordered; that stretch reads KLCPSEPEDE…SSRNKSRKHT (71 aa). Positions 168–227 form a coiled coil; the sequence is RKKLRKKCEKEEKKMEEFPDQDISPLPQPSSRNKSRKHTEALQKLREVNKRLQDLRSCLS. Basic and acidic residues predominate over residues 175–184; it reads CEKEEKKMEE. S191, S197, and S307 each carry phosphoserine. Residues T309 and T311 each carry the phosphothreonine modification. A Ubiquitin-like domain is found at 341 to 412; sequence LRLRVQGKEK…ESGDLIEVWG (72 aa). A phosphoserine mark is found at S362 and S383.

In terms of assembly, interacts with NFATC2, TRAF1, TRAF2 and PRMT1. Interacts with UBE2I/UBC9. Post-translationally, methylation at the N-terminus by PRMT1 modulates interaction with the NFAT complex and results in augmented cytokine production. As to expression, highest level detected in spleen, thymus and testis.

It localises to the nucleus. Its subcellular location is the cytoplasm. Functionally, in T-helper 2 (Th2) cells, regulates the magnitude of NFAT-driven transcription of a specific subset of cytokine genes, including IL3, IL4, IL5 and IL13, but not IL2. Recruits PRMT1 to the IL4 promoter; this leads to enhancement of histone H4 'Arg-3'-methylation and facilitates subsequent histone acetylation at the IL4 locus, thus promotes robust cytokine expression. Down-regulates formation of poly-SUMO chains by UBE2I/UBC9. The protein is NFATC2-interacting protein (Nfatc2ip) of Mus musculus (Mouse).